Reading from the N-terminus, the 349-residue chain is Small ribosomal subunit biogenesis GTPase RsgA (349 aa).

Positions 1–11 (MSKKKLSKGQQ) are enriched in basic residues. Residues 1 to 29 (MSKKKLSKGQQRRVSANHQRRLKKTESKV) are disordered. A CP-type G domain is found at 102 to 272 (HSVLTRPDYY…VIDSPGVREF (171 aa)). GTP is bound by residues 158-161 (NKID) and 212-220 (GQSGVGKSS). Residues Cys-296, Cys-301, His-303, and Cys-309 each contribute to the Zn(2+) site.

The protein belongs to the TRAFAC class YlqF/YawG GTPase family. RsgA subfamily. Monomer. Associates with 30S ribosomal subunit, binds 16S rRNA. It depends on Zn(2+) as a cofactor.

It localises to the cytoplasm. One of several proteins that assist in the late maturation steps of the functional core of the 30S ribosomal subunit. Helps release RbfA from mature subunits. May play a role in the assembly of ribosomal proteins into the subunit. Circularly permuted GTPase that catalyzes slow GTP hydrolysis, GTPase activity is stimulated by the 30S ribosomal subunit. The protein is Small ribosomal subunit biogenesis GTPase RsgA of Pectobacterium carotovorum subsp. carotovorum (strain PC1).